We begin with the raw amino-acid sequence, 75 residues long: uncharacterized protein (75 aa).

In terms of domain architecture, SpoVT-AbrB spans 3–45 (TTVFLSNRSQAVRLPKAVALPENVKRVEVIAVGRTRIITPAGE).

It belongs to the VapB family.

This is an uncharacterized protein from Escherichia coli (strain K12).